The chain runs to 435 residues: ATP-dependent protease ATPase subunit HslU (435 aa).

Residues isoleucine 18, 60–65 (GVGKTE), aspartate 248, glutamate 313, and arginine 385 each bind ATP.

This sequence belongs to the ClpX chaperone family. HslU subfamily. As to quaternary structure, a double ring-shaped homohexamer of HslV is capped on each side by a ring-shaped HslU homohexamer. The assembly of the HslU/HslV complex is dependent on binding of ATP.

The protein localises to the cytoplasm. ATPase subunit of a proteasome-like degradation complex; this subunit has chaperone activity. The binding of ATP and its subsequent hydrolysis by HslU are essential for unfolding of protein substrates subsequently hydrolyzed by HslV. HslU recognizes the N-terminal part of its protein substrates and unfolds these before they are guided to HslV for hydrolysis. The sequence is that of ATP-dependent protease ATPase subunit HslU from Allorhizobium ampelinum (strain ATCC BAA-846 / DSM 112012 / S4) (Agrobacterium vitis (strain S4)).